The following is a 247-amino-acid chain: Sugar fermentation stimulation protein homolog (247 aa).

The protein belongs to the SfsA family.

The sequence is that of Sugar fermentation stimulation protein homolog from Aeromonas salmonicida (strain A449).